A 446-amino-acid polypeptide reads, in one-letter code: Coiled-coil domain-containing protein 112 (446 aa).

Coiled coils occupy residues 23–116 (LEEL…RKID) and 219–400 (ERKK…NVSR). Disordered stretches follow at residues 247–277 (NNTP…AVEA) and 394–430 (VENN…LLHI). Residues 255–268 (NKPEDNQKQKEEQR) are compositionally biased toward basic and acidic residues.

The protein localises to the cytoplasm. The protein resides in the cytoskeleton. It is found in the microtubule organizing center. It localises to the centrosome. Its subcellular location is the centriolar satellite. This is Coiled-coil domain-containing protein 112 (CCDC112) from Macaca fascicularis (Crab-eating macaque).